Here is a 626-residue protein sequence, read N- to C-terminus: Chaperone protein HtpG (626 aa).

An a; substrate-binding region spans residues 1–341 (METKQFKAES…SEDLSLNISR (341 aa)). The segment at 342–552 (EILQHDRQLK…EGELSIEMEK (211 aa)) is b. The segment at 553 to 626 (VLNAMPNNQN…FTNNICKIMK (74 aa)) is c.

Belongs to the heat shock protein 90 family. Homodimer.

It is found in the cytoplasm. Its function is as follows. Molecular chaperone. Has ATPase activity. This chain is Chaperone protein HtpG, found in Clostridium botulinum (strain 657 / Type Ba4).